The sequence spans 431 residues: Glutamate-1-semialdehyde 2,1-aminomutase (431 aa).

Lys265 carries the N6-(pyridoxal phosphate)lysine modification.

The protein belongs to the class-III pyridoxal-phosphate-dependent aminotransferase family. HemL subfamily. Homodimer. It depends on pyridoxal 5'-phosphate as a cofactor.

Its subcellular location is the cytoplasm. It carries out the reaction (S)-4-amino-5-oxopentanoate = 5-aminolevulinate. Its pathway is porphyrin-containing compound metabolism; protoporphyrin-IX biosynthesis; 5-aminolevulinate from L-glutamyl-tRNA(Glu): step 2/2. The polypeptide is Glutamate-1-semialdehyde 2,1-aminomutase (Aliivibrio fischeri (strain ATCC 700601 / ES114) (Vibrio fischeri)).